The chain runs to 580 residues: MAIYSAQAPNSILEEEARFEAEVSETQAWWNSTDLFRLTRRPYTARDVVRLRGSMRQSYASNEMAKKLWRTLKTHQANKTASRTFGALDPVQVSMMAKYLDSIYVSGWQCSSTHTTTNEPGPDLADYPYDTVPNKVEHLFFAQQFHDRKQKEARMSMTREERSKTPYIDYLKPIIADGDTGFGGATATVKLCKLFVERGAAGVHIEDQASVTKKCGHMAGKVLVSVGEHVNRMVAARLQFDIMGVETLLVARTDAVAATLIQTNVDARDHQFILGATNPNLKGKPLADVLARAMASGKSGADLQAVEDEWMAMADLKLFSDCVVDGIKALNVSEQEKGRRLGEWMQQTGGNTGNVLSYYQAKELAEKLGISNLFWDWDLPRTREGFYRFQGSVKAAIVRGWAFGPHADIIWMETSSPDMVECRDFALGVKSKHPEIMLAYNLSPSFNWDASRMTDEQMKNFIPEIARLGYCWQFITLAGFHADALVIDTFAKDFAQRGMLAYVEKIQRQEMMNGVDTLAHQKWSGANYYDQLLKTVQGGISATAAMAKGVTEDQFEETQSSTLALESNIGAGTVLAKSRM.

106 to 108 (SGW) contacts substrate. Aspartate 177 serves as a coordination point for Mg(2+). Cysteine 215 acts as the Proton acceptor in catalysis. Substrate-binding positions include 216-217 (GH), arginine 252, 441-445 (NLSPS), and threonine 476. A Microbody targeting signal motif is present at residues 578–580 (SRM).

It belongs to the isocitrate lyase/PEP mutase superfamily. Isocitrate lyase family. Homotetramer. The cofactor is Mg(2+).

It is found in the glyoxysome. It carries out the reaction D-threo-isocitrate = glyoxylate + succinate. Its pathway is carbohydrate metabolism; glyoxylate cycle; (S)-malate from isocitrate: step 1/2. In terms of biological role, involved in storage lipid mobilization during the growth of higher plant seedling. This is Isocitrate lyase (ICL 8) from Pinus taeda (Loblolly pine).